The primary structure comprises 162 residues: Endoribonuclease YbeY (162 aa).

Residues His128, His132, and His138 each coordinate Zn(2+).

Belongs to the endoribonuclease YbeY family. Requires Zn(2+) as cofactor.

It localises to the cytoplasm. Its function is as follows. Single strand-specific metallo-endoribonuclease involved in late-stage 70S ribosome quality control and in maturation of the 3' terminus of the 16S rRNA. The sequence is that of Endoribonuclease YbeY from Lactococcus lactis subsp. cremoris (strain SK11).